Reading from the N-terminus, the 1119-residue chain is Protein translocase subunit SecA (1119 aa).

Residues glutamine 175, 213 to 217 (GEGKT), and aspartate 714 each bind ATP. The Zn(2+) site is built by cysteine 1106, cysteine 1108, cysteine 1117, and cysteine 1118.

The protein belongs to the SecA family. As to quaternary structure, monomer and homodimer. Part of the essential Sec protein translocation apparatus which comprises SecA, SecYEG and auxiliary proteins SecDF. Other proteins may also be involved. Requires Zn(2+) as cofactor.

It is found in the cell inner membrane. The protein localises to the cytoplasm. It catalyses the reaction ATP + H2O + cellular proteinSide 1 = ADP + phosphate + cellular proteinSide 2.. Part of the Sec protein translocase complex. Interacts with the SecYEG preprotein conducting channel. Has a central role in coupling the hydrolysis of ATP to the transfer of proteins into and across the cell membrane, serving as an ATP-driven molecular motor driving the stepwise translocation of polypeptide chains across the membrane. The chain is Protein translocase subunit SecA from Azobacteroides pseudotrichonymphae genomovar. CFP2.